Reading from the N-terminus, the 961-residue chain is SH3 domain-binding protein 4 (961 aa).

The 60-residue stretch at 55 to 114 folds into the SH3 1 domain; it reads GNAKEVIAIKDYCPNNFTTLKFSKGDHLYVLDTSGGEWWYAHNTTEMGYIPSSYVQPLNY. Ser131, Ser244, Ser249, Ser277, and Ser294 each carry phosphoserine. The ZU5 domain maps to 315–452; the sequence is TNIVCKLDSS…LEPCMYLAIV (138 aa). Residue Ser635 is modified to Phosphoserine. In terms of domain architecture, SH3 2 spans 652-722; sequence SSLKFGKLLK…HTKNVLVVGK (71 aa).

As to quaternary structure, homodimer or homooligomer. Interacts with DNM2, EPS15, clathrin, the adapter protein complex 2/AP-2 and TFRC. Interacts with the Rag GTPases RRAGA, RRAGB, RRAGC and RRAGD; the interaction is most probably direct, preferentially occurs with their inactive GDP-bound form and is negatively regulated by amino acids. Phosphorylated upon EGF stimulation. Phosphorylation prevents interaction with DNM2.

The protein resides in the membrane. The protein localises to the clathrin-coated pit. It is found in the cytoplasmic vesicle. Its subcellular location is the clathrin-coated vesicle. It localises to the nucleus. Its function is as follows. May function in transferrin receptor internalization at the plasma membrane through a cargo-specific control of clathrin-mediated endocytosis. Alternatively, may act as a negative regulator of the amino acid-induced TOR signaling by inhibiting the formation of active Rag GTPase complexes. Preferentially binds inactive Rag GTPase complexes and prevents their interaction with the mTORC1 complex inhibiting its relocalization to lysosomes and its activation. Thereby, may indirectly regulate cell growth, proliferation and autophagy. The protein is SH3 domain-binding protein 4 (Sh3bp4) of Rattus norvegicus (Rat).